We begin with the raw amino-acid sequence, 87 residues long: Phosphocarrier protein HPr (87 aa).

The HPr domain occupies 2–87 (ASKDFHIVAE…NETMTKEGLA (86 aa)). The Pros-phosphohistidine intermediate role is filled by H15. Residue S46 is modified to Phosphoserine; by HPrK/P.

The protein belongs to the HPr family.

It is found in the cytoplasm. Its activity is regulated as follows. Phosphorylation on Ser-46 inhibits the phosphoryl transfer from enzyme I to HPr. General (non sugar-specific) component of the phosphoenolpyruvate-dependent sugar phosphotransferase system (sugar PTS). This major carbohydrate active-transport system catalyzes the phosphorylation of incoming sugar substrates concomitantly with their translocation across the cell membrane. The phosphoryl group from phosphoenolpyruvate (PEP) is transferred to the phosphoryl carrier protein HPr by enzyme I. Phospho-HPr then transfers it to the PTS EIIA domain. In terms of biological role, P-Ser-HPr interacts with the catabolite control protein A (CcpA), forming a complex that binds to DNA at the catabolite response elements cre, operator sites preceding a large number of catabolite-regulated genes. Thus, P-Ser-HPr is a corepressor in carbon catabolite repression (CCR), a mechanism that allows bacteria to coordinate and optimize the utilization of available carbon sources. P-Ser-HPr also plays a role in inducer exclusion, in which it probably interacts with several non-PTS permeases and inhibits their transport activity. The protein is Phosphocarrier protein HPr (ptsH) of Streptococcus mutans serotype c (strain ATCC 700610 / UA159).